Reading from the N-terminus, the 350-residue chain is Protein MGF 360-12L (350 aa).

One copy of the ANK repeat lies at 57–89 (DLNTALVKAVRENNYNLIKLFAEWGANINYGLV).

It belongs to the asfivirus MGF 360 family.

In terms of biological role, plays a role in virus cell tropism, and may be required for efficient virus replication in macrophages. The polypeptide is Protein MGF 360-12L (Ornithodoros (relapsing fever ticks)).